Here is a 405-residue protein sequence, read N- to C-terminus: LENGLARTPPMGWLAWERFRCNVNCREDPRQCISEMLFMEMADRIAEDGWRELGYKYINIDDCWAAKQRDAEGRLVPDPERFPRGIKALADYVHARGLKLDIYGDLGRLTCGGYPGTTLDRVEQDAQTFAEWGVDMLKLDGCYSSGKEQAQGYPQMARALNSTGRPIVYSCSWPAYQGGLPPKVNYTLLGEICNLWRNYDDIQDSWDSVLSIVDWFFTNQDVLQPFAGPGHWNDPDMLIIGNFGLSYEQSRSQMALWTIMAAPLLMSTDLRTISPSAKKILQNRLMIQINQDPLGIQGRRIIKEGSHIEVFLRPLSQAASALVFFSRRTDMPFRYTTSLAKLGFPMGAAYEVQDVYSGKIISGLKTGDNFTVIINPSGVVMWYLCPKALLIQQQAPGGPSRLPLL.

Intrachain disulfides connect Cys-21/Cys-63, Cys-25/Cys-32, and Cys-111/Cys-142. Residues 61 to 62 and Lys-138 each bind substrate; that span reads DD. Asp-140 functions as the Nucleophile in the catalytic mechanism. Asn-161 is a glycosylation site (N-linked (GlcNAc...) asparagine). Cys-171 and Cys-193 are joined by a disulfide. Ser-172 contacts substrate. Residue Asn-185 is glycosylated (N-linked (GlcNAc...) asparagine). Substrate-binding residues include Arg-197 and Asp-201. Asp-201 serves as the catalytic Proton donor. A glycan (N-linked (GlcNAc...) asparagine) is linked at Asn-369.

This sequence belongs to the glycosyl hydrolase 27 family. In terms of assembly, homodimer.

Its subcellular location is the lysosome. The enzyme catalyses Cleavage of non-reducing alpha-(1-&gt;3)-N-acetylgalactosamine residues from human blood group A and AB mucin glycoproteins, Forssman hapten and blood group A lacto series glycolipids.. It carries out the reaction a neolactoside IV(3)-alpha-GalNAc,IV(2)-alpha-Fuc-nLc4Cer(d18:1(4E)) + H2O = a neolactoside IV(2)-alpha-Fuc-nLc4Cer(d18:1(4E)) + N-acetyl-alpha-D-galactosamine. It catalyses the reaction a neolactoside IV(3)-alpha-GalNAc,IV(2)-alpha-Fuc-nLc4Cer(d18:0) + H2O = a neolactoside IV(2)-alpha-Fuc-nLc4Cer(d18:0) + N-acetyl-alpha-D-galactosamine. The catalysed reaction is a globoside IV3GalNAc-Gb4Cer + H2O = N-acetyl-alpha-D-galactosamine + a globoside Gb4Cer. Removes terminal alpha-N-acetylgalactosamine residues from glycolipids and glycopeptides. Required for the breakdown of glycolipids. The sequence is that of Alpha-N-acetylgalactosaminidase (NAGA) from Gallus gallus (Chicken).